The sequence spans 569 residues: Endonuclease/exonuclease/phosphatase family domain-containing protein 1 (569 aa).

The disordered stretch occupies residues 1–20 (MGSTLGCHRSIPRDPSDLSH). Residue Gly2 is the site of N-myristoyl glycine attachment. The segment covering 11–20 (IPRDPSDLSH) has biased composition (basic and acidic residues). Residues Ser16, Ser21, and Ser25 each carry the phosphoserine modification. Positions 38–67 (ERLNINTATEEELMTLPGVTRAVARSIVEY) constitute a HhH domain. A phosphoserine mark is found at Ser106, Ser110, Ser160, and Ser173. The segment at 200-224 (SRPPSTHTNGGLTFTAKPHPSPTSL) is disordered. A compositionally biased stretch (polar residues) spans 202–211 (PPSTHTNGGL). Phosphothreonine is present on Thr265. Residues 548 to 569 (EVPRNGNGVTLEPSEANVKHER) form a disordered region.

This Rattus norvegicus (Rat) protein is Endonuclease/exonuclease/phosphatase family domain-containing protein 1 (Eepd1).